A 365-amino-acid chain; its full sequence is Isopentenyl-diphosphate delta-isomerase (365 aa).

Residue 8 to 9 (RK) participates in substrate binding. FMN contacts are provided by residues 67 to 69 (SIT), S97, and N126. 97–99 (SQR) contacts substrate. Q160 provides a ligand contact to substrate. E161 contributes to the Mg(2+) binding site. Residues K192, T222, 272 to 274 (GIR), and 293 to 294 (AL) contribute to the FMN site.

The protein belongs to the IPP isomerase type 2 family. As to quaternary structure, homooctamer. Dimer of tetramers. The cofactor is FMN. Requires NADPH as cofactor. It depends on Mg(2+) as a cofactor.

It is found in the cytoplasm. It catalyses the reaction isopentenyl diphosphate = dimethylallyl diphosphate. In terms of biological role, involved in the biosynthesis of isoprenoids. Catalyzes the 1,3-allylic rearrangement of the homoallylic substrate isopentenyl (IPP) to its allylic isomer, dimethylallyl diphosphate (DMAPP). The protein is Isopentenyl-diphosphate delta-isomerase of Methanosarcina barkeri (strain Fusaro / DSM 804).